A 113-amino-acid polypeptide reads, in one-letter code: Iron-sulfur cluster insertion protein ErpA (113 aa).

3 residues coordinate iron-sulfur cluster: Cys41, Cys105, and Cys107.

The protein belongs to the HesB/IscA family. As to quaternary structure, homodimer. Requires iron-sulfur cluster as cofactor.

Its function is as follows. Required for insertion of 4Fe-4S clusters for at least IspG. The sequence is that of Iron-sulfur cluster insertion protein ErpA from Vibrio vulnificus (strain YJ016).